The sequence spans 456 residues: Methylenetetrahydrofolate--tRNA-(uracil-5-)-methyltransferase TrmFO (456 aa).

11–16 is an FAD binding site; the sequence is GAGLAG.

This sequence belongs to the MnmG family. TrmFO subfamily. It depends on FAD as a cofactor.

The protein localises to the cytoplasm. It carries out the reaction uridine(54) in tRNA + (6R)-5,10-methylene-5,6,7,8-tetrahydrofolate + NADH + H(+) = 5-methyluridine(54) in tRNA + (6S)-5,6,7,8-tetrahydrofolate + NAD(+). The enzyme catalyses uridine(54) in tRNA + (6R)-5,10-methylene-5,6,7,8-tetrahydrofolate + NADPH + H(+) = 5-methyluridine(54) in tRNA + (6S)-5,6,7,8-tetrahydrofolate + NADP(+). Its function is as follows. Catalyzes the folate-dependent formation of 5-methyl-uridine at position 54 (M-5-U54) in all tRNAs. This Synechococcus sp. (strain CC9605) protein is Methylenetetrahydrofolate--tRNA-(uracil-5-)-methyltransferase TrmFO.